We begin with the raw amino-acid sequence, 130 residues long: Protein AUXIN-REGULATED GENE INVOLVED IN ORGAN SIZE (130 aa).

Residues Phe65–Ser116 form an organ Size Related (OSR) domain region. 2 helical membrane passes run Leu70–Leu90 and Pro94–Met114.

This sequence belongs to the plant organ size related (OSR) protein family. As to expression, mostly expressed in flowers, inflorescence stems, leaf primordia and young leaves, and, to a lower extent, in siliques, cotyledon vascular bundles, roots (pericycle and root tips) and mature leaves.

The protein localises to the membrane. It is found in the nucleus. The protein resides in the cytoplasm. Its subcellular location is the endoplasmic reticulum. Its function is as follows. Promotes cell proliferation-dependent organ growth. Takes part in the AXR1-dependent auxin signaling pathway that requires ANT during organogenesis. The chain is Protein AUXIN-REGULATED GENE INVOLVED IN ORGAN SIZE (ARGOS) from Arabidopsis thaliana (Mouse-ear cress).